A 949-amino-acid chain; its full sequence is MTPVAVTSVAPVDIIHDLKRPKRATESSPITLPDVFSRAVSQYPNHELSFITSSVHDSSMHTTTFTEFNQRVRALAQAMLAWDKPAGAVIVIYLTEHEDNVAAVWACLLSGYVPCLQPALSAQQAHKEGHVAHIKNLFSSATWLTNESGAEQVQSISGLDIHLLSELKASAGVGMDFSAHQPNPDDEAILFLTSGSTGFSKAVVHTHRTILAACHAKGENYGLTSESKIMNWVGFDHVAGSLEMHIAPLLYGASQLHVHVSAILSDPLCFLRLIEENSIQLAFASNFLLAKLTRDLEKRSDLFGKFDLSSIKRINSGGEAVVSSTAQAFARTLKNLAKDGDASFVISAGFGMTETCAGCIYDSINVLETPPSYEFLELGTPVTGCEMRVVNPEDGVTPRPDGESGELQVRGPMVFVRYYNNPEATSSSFVEGGWYRTGDVGIVEKGKMRLSGRIKDTVVVHGVSYGIPELETYLQTVEGVTHSFLAAAPYRAPGQETEGFVVFYSPTFGLDSEDAPVKLYATHCAIRDVSVKLITLPPQQIIPIPINQMERTTLGKLSRARLVNMFKQGELAKHIDRAKELIGIARGASFVALSTETEKTLAGIYAVILDLSVGDMSANDNLFELGGTSIDVIRLKREGESAFDLPEIPTIRILKHPVISNLAKYVDSLVSKDVSEEEYDPIVPLQLTGKKTPIFMVHPGMADVLIFVNLAKYFQNERPFYALRARGFEPGQPFFTTTGEIVSCYTAAVKRTQPHGPYAIAGYSYGGVIAFEIAKRLEAMGDEVKFTGVIDIIAHRARENDLTLGLLTLSHLLGLVSKQDINDLAPSMRPLTRKEQLELVWKLSPPERLVELQLTPEKLKHWVNVSGSLMECGKDYEPASSVSVMDVFYANPSRGSKEAWLHRLKRWTDYSRSEPSYIDVPGHHYTLMDFDHVARFQKIFRARLEARGL.

The interval 38–460 is adenylation (A) domain; sequence RAVSQYPNHE…SGRIKDTVVV (423 aa). The region spanning 592–670 is the Carrier domain; sequence ALSTETEKTL…NLAKYVDSLV (79 aa). Residues 597 to 667 are thiolation and peptide carrier (T) domain; that stretch reads TEKTLAGIYA…VISNLAKYVD (71 aa). The residue at position 629 (S629) is an O-(pantetheine 4'-phosphoryl)serine. A thioesterase (TE) domain region spans residues 693 to 934; that stretch reads PIFMVHPGMA…YTLMDFDHVA (242 aa).

Belongs to the ATP-dependent AMP-binding enzyme family.

Inactive atromentin synthetase homolog. While the invA3 adenylation (A) domain is capable of adenylating 4-hydroxyphenylpyruvate (4-HPP), the invA3 enzyme is inactive because of its non-functional thioesterase (TE) domain. This chain is Inactive atromentin synthetase invA3 (invA3), found in Paxillus involutus (Naked brimcap).